The chain runs to 699 residues: Receptor-type tyrosine-protein phosphatase epsilon (699 aa).

The first 22 residues, 1-22 (MEPFCPLLLASFSLSLATAGQG), serve as a signal peptide directing secretion. The span at 20–36 (GQGNDTTPTESNWTSTT) shows a compositional bias: low complexity. Residues 20-41 (GQGNDTTPTESNWTSTTAGPPD) form a disordered region. Asn23 and Asn31 each carry an N-linked (GlcNAc...) asparagine glycan. Residues 23-47 (NDTTPTESNWTSTTAGPPDPGTSQP) lie on the Extracellular side of the membrane. A helical transmembrane segment spans residues 48–68 (LLTWLLLPLLLLLFLLAAYFF). Residues 69 to 699 (RFRKQRKAVV…DIFSDYANFK (631 aa)) are Cytoplasmic-facing. 2 consecutive Tyrosine-protein phosphatase domains span residues 134-393 (FREE…LLEY) and 425-688 (LEEE…VQDF). Residues Asp302, 334 to 340 (CSAGVGR), and Gln378 each bind substrate. The active-site Phosphocysteine intermediate is Cys334. Catalysis depends on Cys629, which acts as the Phosphocysteine intermediate. Tyr695 is modified (phosphotyrosine).

Belongs to the protein-tyrosine phosphatase family. Receptor class 4 subfamily. As to quaternary structure, monomer. Isoform 2: Homodimer. Can form oligomers. Dimerization is increased by oxidative stress and decreased by EGFR. Isoform 2 interacts with GRB2. A catalytically active cytoplasmic form (p65) is produced by proteolytic cleavage of either isoform 1, isoform 2 or isoform 3. In terms of processing, isoform 1 and isoform 2 are phosphorylated on tyrosine residues by tyrosine kinase Neu. Post-translationally, N-glycosylated. As to expression, isoform 1 is highly expressed in the brain, lung, spleen and testis. Isoform 2 is highly expressed in thymus, spleen and lung. Isoform 1 and isoform 2 are expressed in primary hepatocytes.

The protein resides in the cell membrane. Its subcellular location is the cytoplasm. The enzyme catalyses O-phospho-L-tyrosyl-[protein] + H2O = L-tyrosyl-[protein] + phosphate. In terms of biological role, isoform 1 plays a critical role in signaling transduction pathways and phosphoprotein network topology in red blood cells. May play a role in osteoclast formation and function. Acts as a negative regulator of insulin receptor (IR) signaling and is involved in insulin-induced glucose metabolism mainly through direct dephosphorylation and inactivation of IR in hepatocytes and liver. Functionally, isoform 2 acts as a negative regulator of insulin receptor (IR) signaling in skeletal muscle. Regulates insulin-induced tyrosine phosphorylation of insulin receptor (IR) and insulin receptor substrate 1 (IRS-1), phosphorylation of protein kinase B and glycogen synthase kinase-3 and insulin induced stimulation of glucose uptake. Isoform 1 and isoform 2 act as a negative regulator of FceRI-mediated signal transduction leading to cytokine production and degranulation, most likely by acting at the level of SYK to affect downstream events such as phosphorylation of SLP76 and LAT and mobilization of Ca(2+). The protein is Receptor-type tyrosine-protein phosphatase epsilon (Ptpre) of Rattus norvegicus (Rat).